Reading from the N-terminus, the 252-residue chain is 5-oxoprolinase subunit A (252 aa).

This sequence belongs to the LamB/PxpA family. In terms of assembly, forms a complex composed of PxpA, PxpB and PxpC.

It carries out the reaction 5-oxo-L-proline + ATP + 2 H2O = L-glutamate + ADP + phosphate + H(+). In terms of biological role, catalyzes the cleavage of 5-oxoproline to form L-glutamate coupled to the hydrolysis of ATP to ADP and inorganic phosphate. This Photorhabdus laumondii subsp. laumondii (strain DSM 15139 / CIP 105565 / TT01) (Photorhabdus luminescens subsp. laumondii) protein is 5-oxoprolinase subunit A.